Here is a 155-residue protein sequence, read N- to C-terminus: MGEAIEPIVTQELAGLGFDLVELRRGGSRARPVLEIRIDRRDEEKVTIDDCARVSRALEARLEAAALVGEQYVLEVSSPGADRPLRHAADWRRFVGRRATVTSGLLAGGKQEVEIVAVTGEGGAEVALVRDPKGREVSVPLREVSQARLAFNWKR.

The protein belongs to the RimP family.

The protein resides in the cytoplasm. Required for maturation of 30S ribosomal subunits. The polypeptide is Ribosome maturation factor RimP (Gemmatimonas aurantiaca (strain DSM 14586 / JCM 11422 / NBRC 100505 / T-27)).